Consider the following 236-residue polypeptide: 28 kDa antigen (236 aa).

The N-terminal stretch at 1–22 (MPNRRRCKLSTAISTVATLAIA) is a signal peptide. Residues 76 to 105 (PVPSLTGTDDPGNGLRTPGLTSPDLTNQEL) form a disordered region. Over residues 94 to 105 (GLTSPDLTNQEL) the composition is skewed to polar residues.

This sequence to M.tuberculosis ERP.

The chain is 28 kDa antigen from Mycobacterium leprae (strain TN).